We begin with the raw amino-acid sequence, 998 residues long: Type II restriction enzyme and methyltransferase RM.Eco57I (998 aa).

This sequence in the C-terminal section; belongs to the N(4)/N(6)-methyltransferase family. Monomer.

The catalysed reaction is Endonucleolytic cleavage of DNA to give specific double-stranded fragments with terminal 5'-phosphates.. It carries out the reaction a 2'-deoxyadenosine in DNA + S-adenosyl-L-methionine = an N(6)-methyl-2'-deoxyadenosine in DNA + S-adenosyl-L-homocysteine + H(+). Mg(2+) is absolutely required for DNA restriction. In terms of biological role, an E, G and S subtype restriction enzyme that recognizes the (non-palindromic) double-stranded sequence 5'-CTGAAG-3' and cleaves respectively 22 bases after C-1 and 14 bases before C'-1; cleavage of lambda DNA is never complete. Also acts as a methylase that causes specific methylation on A-5 in 5'-CTGAAG-3', the other strand is methylated by the M.Eco57I methylase. The polypeptide is Type II restriction enzyme and methyltransferase RM.Eco57I (Escherichia coli).